We begin with the raw amino-acid sequence, 394 residues long: Chorismate synthase (394 aa).

Arg-48 serves as a coordination point for NADP(+). The tract at residues 52–90 (QSMITTSRGEPDEVSIQSGLQDGYTTGTPIGMTIENKDA) is disordered. Residues 66–79 (SIQSGLQDGYTTGT) are compositionally biased toward polar residues. FMN is bound by residues 125–127 (RSS), Gly-297, 312–316 (HAPTS), and Arg-339.

This sequence belongs to the chorismate synthase family. The cofactor is FMNH2.

It carries out the reaction 5-O-(1-carboxyvinyl)-3-phosphoshikimate = chorismate + phosphate. Its pathway is metabolic intermediate biosynthesis; chorismate biosynthesis; chorismate from D-erythrose 4-phosphate and phosphoenolpyruvate: step 7/7. In terms of biological role, catalyzes the anti-1,4-elimination of the C-3 phosphate and the C-6 proR hydrogen from 5-enolpyruvylshikimate-3-phosphate (EPSP) to yield chorismate, which is the branch point compound that serves as the starting substrate for the three terminal pathways of aromatic amino acid biosynthesis. This reaction introduces a second double bond into the aromatic ring system. The chain is Chorismate synthase from Halobacterium salinarum (strain ATCC 700922 / JCM 11081 / NRC-1) (Halobacterium halobium).